Reading from the N-terminus, the 339-residue chain is Phenylalanine--tRNA ligase alpha subunit (339 aa).

Glutamate 253 provides a ligand contact to Mg(2+).

This sequence belongs to the class-II aminoacyl-tRNA synthetase family. Phe-tRNA synthetase alpha subunit type 1 subfamily. As to quaternary structure, tetramer of two alpha and two beta subunits. Mg(2+) is required as a cofactor.

It localises to the cytoplasm. It catalyses the reaction tRNA(Phe) + L-phenylalanine + ATP = L-phenylalanyl-tRNA(Phe) + AMP + diphosphate + H(+). The polypeptide is Phenylalanine--tRNA ligase alpha subunit (Thioalkalivibrio sulfidiphilus (strain HL-EbGR7)).